The primary structure comprises 474 residues: Cobyric acid synthase (474 aa).

The 181-residue stretch at 251–431 folds into the GATase cobBQ-type domain; sequence TGFVAIPRLP…LHGLLENSAY (181 aa). Cys-328 serves as the catalytic Nucleophile. The active site involves His-423.

The protein belongs to the CobB/CobQ family. CobQ subfamily.

Its pathway is cofactor biosynthesis; adenosylcobalamin biosynthesis. In terms of biological role, catalyzes amidations at positions B, D, E, and G on adenosylcobyrinic A,C-diamide. NH(2) groups are provided by glutamine, and one molecule of ATP is hydrogenolyzed for each amidation. This is Cobyric acid synthase from Deinococcus radiodurans (strain ATCC 13939 / DSM 20539 / JCM 16871 / CCUG 27074 / LMG 4051 / NBRC 15346 / NCIMB 9279 / VKM B-1422 / R1).